The sequence spans 525 residues: Arylsulfatase G (525 aa).

A signal peptide spans 1 to 16 (MGWLFLKVLLVGMAFS). The Ca(2+) site is built by aspartate 44, aspartate 45, and cysteine 84. Cysteine 84 functions as the Nucleophile in the catalytic mechanism. Cysteine 84 is modified (3-oxoalanine (Cys)). N-linked (GlcNAc...) asparagine glycosylation occurs at asparagine 117. Position 137 (lysine 137) interacts with substrate. Residue histidine 139 is part of the active site. Serine 162 is a binding site for substrate. N-linked (GlcNAc...) asparagine glycosylation occurs at asparagine 215. Histidine 251 is a binding site for substrate. The Ca(2+) site is built by aspartate 302 and asparagine 303. Residues asparagine 356 and asparagine 497 are each glycosylated (N-linked (GlcNAc...) asparagine).

The protein belongs to the sulfatase family. Requires Ca(2+) as cofactor. N-glycosylated with both high mannose and complex type sugars. In terms of processing, the conversion to 3-oxoalanine (also known as C-formylglycine, FGly), of a serine or cysteine residue in prokaryotes and of a cysteine residue in eukaryotes, is critical for catalytic activity. Post-translationally, the 63-kDa precursor undergoes proteolytic processing in two steps, yielding two fragments in the first step (apparent molecular masses of 44 and 18 kDa). In the second step, the 44-kDa fragment is processed further to the 34- and 10-kDa chains. The 10-kDa chain is a cleavage product of the 44-kDa fragment but linked to the 18-kDa chain through a disulfide bridge. In terms of tissue distribution, highly expressed in the spleen, kidney, liver, brain, and testis (at protein level).

It localises to the lysosome. The catalysed reaction is an aryl sulfate + H2O = a phenol + sulfate + H(+). The enzyme catalyses Hydrolysis of the 3-sulfate groups of the N-sulfo-D-glucosamine 3-O-sulfate units of heparin.. Displays arylsulfatase activity at acidic pH towards the artificial substrate p-nitrocatechol sulfate. Catalyzes the hydrolysis of the 3-sulfate groups of the N-sulfo-D-glucosamine 3-O-sulfate units of heparin. In Mus musculus (Mouse), this protein is Arylsulfatase G (Arsg).